The chain runs to 707 residues: UvrABC system protein C (707 aa).

Residues Ala14–Val94 enclose the GIY-YIG domain. Residues Gly206–Ser241 enclose the UVR domain. A disordered region spans residues Pro654–Ala684. Residues Pro658–Ala684 show a composition bias toward low complexity.

This sequence belongs to the UvrC family. Interacts with UvrB in an incision complex.

It is found in the cytoplasm. In terms of biological role, the UvrABC repair system catalyzes the recognition and processing of DNA lesions. UvrC both incises the 5' and 3' sides of the lesion. The N-terminal half is responsible for the 3' incision and the C-terminal half is responsible for the 5' incision. The polypeptide is UvrABC system protein C (Anaeromyxobacter dehalogenans (strain 2CP-C)).